The chain runs to 101 residues: Small ribosomal subunit protein uS10 (101 aa).

This sequence belongs to the universal ribosomal protein uS10 family. In terms of assembly, part of the 30S ribosomal subunit.

In terms of biological role, involved in the binding of tRNA to the ribosomes. This is Small ribosomal subunit protein uS10 from Mycoplasmopsis synoviae (strain 53) (Mycoplasma synoviae).